The sequence spans 291 residues: UPF0276 protein VV1_0952 (291 aa).

It belongs to the UPF0276 family.

In Vibrio vulnificus (strain CMCP6), this protein is UPF0276 protein VV1_0952.